Consider the following 187-residue polypeptide: Small monomeric GTPase RhbA (187 aa).

Residues S17, V18, G19, K20, S21, S22, V33, and E34 each contribute to the GDP site. S17 contacts GTP. Positions 19, 20, 21, 22, and 33 each coordinate GTP. S21 provides a ligand contact to Mg(2+). GTP is bound by residues Y36, T39, N120, D123, and A152. The Effector region motif lies at 36 to 44 (YYPTIENTF). T39 contributes to the Mg(2+) binding site. Residues N120, D123, and A152 each contribute to the GDP site. C184 is lipidated: S-farnesyl cysteine.

Belongs to the small GTPase superfamily. Rheb family. Post-translationally, farnesylation is important for efficiently activating mTORC1-mediated signaling.

It localises to the cell membrane. It catalyses the reaction GTP + H2O = GDP + phosphate + H(+). Its activity is regulated as follows. Alternates between an inactive form bound to GDP and an active form bound to GTP. Small GTPase that acts as an allosteric activator of the canonical TOR pathway, an evolutionarily conserved central nutrient sensor that stimulates anabolic reactions and macromolecule biosynthesis to promote cellular biomass generation and growth. Plays a role in virulence. This Aspergillus fumigatus (strain ATCC MYA-4609 / CBS 101355 / FGSC A1100 / Af293) (Neosartorya fumigata) protein is Small monomeric GTPase RhbA.